Reading from the N-terminus, the 572-residue chain is Adenine deaminase (572 aa).

This sequence belongs to the metallo-dependent hydrolases superfamily. Adenine deaminase family. Mn(2+) serves as cofactor.

The enzyme catalyses adenine + H2O + H(+) = hypoxanthine + NH4(+). This Clostridium perfringens (strain 13 / Type A) protein is Adenine deaminase.